We begin with the raw amino-acid sequence, 351 residues long: Anthranilate phosphoribosyltransferase (351 aa).

5-phospho-alpha-D-ribose 1-diphosphate-binding positions include Gly-80, 83–84 (GD), Thr-88, 90–93 (NIST), 108–116 (KHGNRSVTS), and Ser-120. Gly-80 contributes to the anthranilate binding site. Position 92 (Ser-92) interacts with Mg(2+). Residue Asn-111 participates in anthranilate binding. Anthranilate is bound at residue Arg-166. Mg(2+) contacts are provided by Asp-229 and Glu-230.

The protein belongs to the anthranilate phosphoribosyltransferase family. As to quaternary structure, homodimer. Mg(2+) is required as a cofactor.

The catalysed reaction is N-(5-phospho-beta-D-ribosyl)anthranilate + diphosphate = 5-phospho-alpha-D-ribose 1-diphosphate + anthranilate. It participates in amino-acid biosynthesis; L-tryptophan biosynthesis; L-tryptophan from chorismate: step 2/5. Catalyzes the transfer of the phosphoribosyl group of 5-phosphorylribose-1-pyrophosphate (PRPP) to anthranilate to yield N-(5'-phosphoribosyl)-anthranilate (PRA). The chain is Anthranilate phosphoribosyltransferase from Chlorobium chlorochromatii (strain CaD3).